Consider the following 126-residue polypeptide: uncharacterized protein (126 aa).

Residues 1–27 form a disordered region; sequence MSKSKTPNFDDMEVLDDTNDEYDDSES. Over residues 10-27 the composition is skewed to acidic residues; the sequence is DDMEVLDDTNDEYDDSES.

This is an uncharacterized protein from Halorubrum sp. PV6 (HRPV-1).